A 140-amino-acid polypeptide reads, in one-letter code: Small ribosomal subunit protein bS6 (140 aa).

The tract at residues 96–140 is disordered; sequence VTGQSEMLKAEENRSERRERRDRPEHEGADSADSDDSDNSDNADE. The span at 103–124 shows a compositional bias: basic and acidic residues; sequence LKAEENRSERRERRDRPEHEGA. Over residues 125–140 the composition is skewed to acidic residues; it reads DSADSDDSDNSDNADE.

This sequence belongs to the bacterial ribosomal protein bS6 family.

In terms of biological role, binds together with bS18 to 16S ribosomal RNA. This is Small ribosomal subunit protein bS6 from Pseudomonas fluorescens (strain SBW25).